We begin with the raw amino-acid sequence, 317 residues long: Sulfate adenylyltransferase subunit 2 (317 aa).

Disordered stretches follow at residues 1–21 and 298–317; these read MPDS…APLD and RAID…EGYF.

The protein belongs to the PAPS reductase family. CysD subfamily. As to quaternary structure, heterodimer composed of CysD, the smaller subunit, and CysN.

The enzyme catalyses sulfate + ATP + H(+) = adenosine 5'-phosphosulfate + diphosphate. It participates in sulfur metabolism; hydrogen sulfide biosynthesis; sulfite from sulfate: step 1/3. Its function is as follows. With CysN forms the ATP sulfurylase (ATPS) that catalyzes the adenylation of sulfate producing adenosine 5'-phosphosulfate (APS) and diphosphate, the first enzymatic step in sulfur assimilation pathway. APS synthesis involves the formation of a high-energy phosphoric-sulfuric acid anhydride bond driven by GTP hydrolysis by CysN coupled to ATP hydrolysis by CysD. The chain is Sulfate adenylyltransferase subunit 2 from Rhizobium johnstonii (strain DSM 114642 / LMG 32736 / 3841) (Rhizobium leguminosarum bv. viciae).